The sequence spans 116 residues: Putative transmembrane protein ORF116 (116 aa).

The next 3 membrane-spanning stretches (helical) occupy residues Ile20 to Leu40, Leu53 to Ile73, and Phe76 to Asn96.

The protein resides in the host membrane. This chain is Putative transmembrane protein ORF116, found in Acidianus bottle-shaped virus (isolate Italy/Pozzuoli) (ABV).